We begin with the raw amino-acid sequence, 123 residues long: WAP four-disulfide core domain protein 5 (123 aa).

The N-terminal stretch at 1 to 24 (MRIQSLLLLGALLAVGSQLPAVFG) is a signal peptide. WAP domains follow at residues 27–73 (KGEK…CVPR) and 74–121 (VSVK…RDPA). Disulfide bonds link Cys34–Cys62, Cys41–Cys66, Cys49–Cys61, Cys55–Cys70, Cys81–Cys109, Cys88–Cys113, Cys96–Cys108, and Cys102–Cys117.

It localises to the secreted. Functionally, putative acid-stable proteinase inhibitor. This Chlorocebus aethiops (Green monkey) protein is WAP four-disulfide core domain protein 5 (WFDC5).